The chain runs to 217 residues: Urease accessory protein UreF (217 aa).

This sequence belongs to the UreF family. As to quaternary structure, ureD, UreF and UreG form a complex that acts as a GTP-hydrolysis-dependent molecular chaperone, activating the urease apoprotein by helping to assemble the nickel containing metallocenter of UreC. The UreE protein probably delivers the nickel.

The protein resides in the cytoplasm. Its function is as follows. Required for maturation of urease via the functional incorporation of the urease nickel metallocenter. This chain is Urease accessory protein UreF, found in Ruegeria pomeroyi (strain ATCC 700808 / DSM 15171 / DSS-3) (Silicibacter pomeroyi).